Consider the following 89-residue polypeptide: Arminin 375 (89 aa).

The N-terminal stretch at 1 to 18 (MKAVFAILFLAFIALTYA) is a signal peptide. Residues 19 to 57 (KSYDEVKEEIKNEVEREIFEDLEEESDELDNYVEESNDA) constitute a propeptide that is removed on maturation. A86 carries the post-translational modification Alanine amide.

It belongs to the arminin family. Expressed in entodermal epithelium along the body column.

It is found in the secreted. The protein resides in the target cell membrane. Antimicrobial peptide with a broad-spectrum antimicrobial activity. Keeps its antibacterial activity under a wide range of salt concentrations that mimic physiological conditions of human blood, which is surprising, since Hydra is an obligate freshwater animal with nearly no salt tolerance. Does not affect red blood cells. The polypeptide is Arminin 375 (Hydra oligactis (Brown hydra)).